Reading from the N-terminus, the 492-residue chain is Fascin-2 (492 aa).

It belongs to the fascin family. Localized specifically in the outer and inner segments of the photoreceptor cells in the retina.

The protein resides in the cytoplasm. Its subcellular location is the cytoskeleton. The protein localises to the cell projection. It is found in the stereocilium. Functionally, acts as an actin bundling protein. May play a pivotal role in photoreceptor cell-specific events, such as disk morphogenesis. In Homo sapiens (Human), this protein is Fascin-2 (FSCN2).